A 520-amino-acid polypeptide reads, in one-letter code: GMP synthase [glutamine-hydrolyzing] (520 aa).

Positions 9–202 constitute a Glutamine amidotransferase type-1 domain; sequence HVLIVDFGSQ…THKIAGLKGD (194 aa). Cys-86 (nucleophile) is an active-site residue. Active-site residues include His-176 and Glu-178. In terms of domain architecture, GMPS ATP-PPase spans 203–395; that stretch reads WTMKAFREEA…LGLPPQFVGR (193 aa). Residue 230–236 coordinates ATP; sequence SGGVDSS.

Homodimer.

It carries out the reaction XMP + L-glutamine + ATP + H2O = GMP + L-glutamate + AMP + diphosphate + 2 H(+). The protein operates within purine metabolism; GMP biosynthesis; GMP from XMP (L-Gln route): step 1/1. Catalyzes the synthesis of GMP from XMP. The chain is GMP synthase [glutamine-hydrolyzing] from Phenylobacterium zucineum (strain HLK1).